The following is a 1208-amino-acid chain: Neural cell adhesion molecule L1-like protein (1208 aa).

Positions 1-24 are cleaved as a signal peptide; the sequence is MEPLLLGRGLIVYLMFLLLKFSKA. Residues 25 to 1082 lie on the Extracellular side of the membrane; that stretch reads IEIPSSVQQV…LYDDISTQGW (1058 aa). 2 consecutive Ig-like C2-type domains span residues 35–124 and 128–223; these read PTII…EEIE and PSVP…MKLT. Intrachain disulfides connect Cys57/Cys109 and Cys153/Cys204. 2 N-linked (GlcNAc...) asparagine glycosylation sites follow: Lys231 and Asn299. 4 Ig-like C2-type domains span residues 235 to 328, 331 to 417, 423 to 510, and 515 to 607; these read PKLL…VIVE, PRWT…ANID, PLIQ…ANLD, and TKLR…TQVT. Intrachain disulfides connect Cys262–Cys310, Cys352–Cys401, Cys445–Cys494, and Cys536–Cys591. N-linked (GlcNAc...) asparagine glycans are attached at residues Asn476 and Asn482. The short motif at 555 to 558 is the DGEA element; that stretch reads DGEA. N-linked (GlcNAc...) asparagine glycans are attached at residues Asn562 and Asn580. 4 consecutive Fibronectin type-III domains span residues 614–709, 714–807, 809–914, and 918–1015; these read PPEN…TPPA, NPQN…SGED, PDTA…TPEG, and QPTF…LGEG. The interval 693–716 is disordered; the sequence is GRSQPSQPSDHHETPPAAPDRNPQ. N-linked (GlcNAc...) asparagine glycosylation is found at Asn767, Asn822, Asn945, and Asn1026. A helical membrane pass occupies residues 1083–1103; it reads FIGLMCAIALLTLLLLTVCFV. At 1104–1208 the chain is on the cytoplasmic side; the sequence is KRNRGGKYSV…SSTATFPLRA (105 aa). The interval 1131–1163 is disordered; that stretch reads ETFGEYSDSDEKPLKGSLRSLNRDMQPTESADS. Phosphoserine occurs at positions 1147, 1160, and 1180. Residues 1149 to 1161 show a composition bias toward polar residues; that stretch reads RSLNRDMQPTESA. Residues 1181–1185 carry the FIG[AQ]Y motif; the sequence is FIGAY. Residues 1189–1208 form a disordered region; sequence KEKGSVESNGSSTATFPLRA. Residues 1194-1208 are compositionally biased toward polar residues; it reads VESNGSSTATFPLRA.

This sequence belongs to the immunoglobulin superfamily. L1/neurofascin/NgCAM family. As to quaternary structure, may interact with L1CAM. May interact with ITGB1/ITGA1 heterodimer and ITGB1/ITGA2 heterodimer as well as with ANK3. Post-translationally, cleavage by metalloprotease ADAM8 in the extracellular part generates 2 soluble forms (125 kDa and 165 kDa) in vitro and is inhibited by metalloprotease inhibitors. Cleaved by BACE1. N-glycosylated. Contains N-linked oligosaccharides with a sulfated carbohydrate structure type HNK-1 (SO4-3-GlcUABeta1,3GalBeta1,4GlcNAc). In terms of processing, O-glycosylated. In terms of tissue distribution, expressed in the fetal and adult brain as well as in Schwann cell culture. Also detected in adult peripheral tissues.

The protein localises to the cell membrane. It localises to the secreted. The protein resides in the extracellular space. Its subcellular location is the extracellular matrix. In terms of biological role, extracellular matrix and cell adhesion protein that plays a role in nervous system development and in synaptic plasticity. Both soluble and membranous forms promote neurite outgrowth of cerebellar and hippocampal neurons and suppress neuronal cell death. Plays a role in neuronal positioning of pyramidal neurons and in regulation of both the number of interneurons and the efficacy of GABAergic synapses. May play a role in regulating cell migration in nerve regeneration and cortical development. Potentiates integrin-dependent cell migration towards extracellular matrix proteins. Recruits ANK3 to the plasma membrane. The protein is Neural cell adhesion molecule L1-like protein (CHL1) of Homo sapiens (Human).